The sequence spans 444 residues: 23S rRNA (uracil(1939)-C(5))-methyltransferase RlmD (444 aa).

The TRAM domain occupies 5–67 (RNRFDRTPFQ…RHFDEAKTVE (63 aa)). Positions 80, 86, 89, and 168 each coordinate [4Fe-4S] cluster. The S-adenosyl-L-methionine site is built by Gln276, Phe305, Asn310, Glu326, Asp353, and Asp374. Cys400 acts as the Nucleophile in catalysis.

The protein belongs to the class I-like SAM-binding methyltransferase superfamily. RNA M5U methyltransferase family. RlmD subfamily.

It carries out the reaction uridine(1939) in 23S rRNA + S-adenosyl-L-methionine = 5-methyluridine(1939) in 23S rRNA + S-adenosyl-L-homocysteine + H(+). In terms of biological role, catalyzes the formation of 5-methyl-uridine at position 1939 (m5U1939) in 23S rRNA. The chain is 23S rRNA (uracil(1939)-C(5))-methyltransferase RlmD from Xanthomonas campestris pv. campestris (strain 8004).